The primary structure comprises 186 residues: MKVLHLDSGIFLEQSVSRQVSQNIVNKLKEKQDITLFHRDLVANPVPHLAADELLAEEKPLIDELVQELLDADTLVIGAPMYNFTIPTQLKAWFDRVLQAGVTFKYTEQGPQGLVNGKKVYIASGRGGIYSQGEAQAMDHQESYLKQVLAFIGITDVTIIRAEGMNMGDEPRQQGFKEAEQEIETI.

Residues 15-17 (SVS) and 81-84 (MYNF) contribute to the FMN site.

This sequence belongs to the azoreductase type 1 family. As to quaternary structure, homodimer. FMN serves as cofactor.

The catalysed reaction is 2 a quinone + NADH + H(+) = 2 a 1,4-benzosemiquinone + NAD(+). It catalyses the reaction N,N-dimethyl-1,4-phenylenediamine + anthranilate + 2 NAD(+) = 2-(4-dimethylaminophenyl)diazenylbenzoate + 2 NADH + 2 H(+). In terms of biological role, quinone reductase that provides resistance to thiol-specific stress caused by electrophilic quinones. Also exhibits azoreductase activity. Catalyzes the reductive cleavage of the azo bond in aromatic azo compounds to the corresponding amines. In Idiomarina loihiensis (strain ATCC BAA-735 / DSM 15497 / L2-TR), this protein is FMN-dependent NADH:quinone oxidoreductase 1.